The chain runs to 335 residues: MTAPSKPVLVADIGGTNARFALADIDASVPLLDDTCREFAVVEFGSLGEAARYYLDQIGVQATKGVFAVAGRVDGDEARITNHPWVISRSRTATMLGFSTLHLINDFAAQAMAISLLRPQDVVQVGGASWRPAPIELPRNYGVIGPGTGLGVGGLIIRNGRCFPLETEGGHVSFPPGTPEEIRVLEILSEQFGRVSNERLICGPGLVNIHRALSEIAGIDPGPLEPKDITARAAAGDPRASRTIDLFCAIFGAIAGDMVLMQGAWDGVFLTGGLVPKVLDSLQHSGFRQRFEHKGRFSAIMSRVPSLAVMHPHAGLLGAAAYAVDAERALPGEQR.

Residue Ala11–Thr16 participates in ATP binding.

This sequence belongs to the bacterial glucokinase family.

It localises to the cytoplasm. It catalyses the reaction D-glucose + ATP = D-glucose 6-phosphate + ADP + H(+). The protein is Glucokinase of Xanthomonas campestris pv. campestris (strain 8004).